The following is a 181-amino-acid chain: Extracellular superoxide dismutase [Cu-Zn] (181 aa).

The first 18 residues, 1–18 (MMQYLVVSLALCATICSA), serve as a signal peptide directing secretion. The N-linked (GlcNAc...) asparagine glycan is linked to asparagine 46. 3 residues coordinate Cu cation: histidine 75, histidine 77, and histidine 92. An intrachain disulfide couples cysteine 86 to cysteine 175. Histidine 92, histidine 100, histidine 109, and aspartate 112 together coordinate Zn(2+). N-linked (GlcNAc...) asparagine glycosylation is present at asparagine 119. Histidine 149 lines the Cu cation pocket. A glycan (N-linked (GlcNAc...) asparagine) is linked at asparagine 159.

Belongs to the Cu-Zn superoxide dismutase family. Cu cation is required as a cofactor. Requires Zn(2+) as cofactor. Expressed at higher levels in females compared to males.

The protein localises to the secreted. It catalyses the reaction 2 superoxide + 2 H(+) = H2O2 + O2. Functionally, protects the extracellular space from the toxic effects of reactive oxygen intermediates by converting superoxide radicals into hydrogen peroxide and oxygen. The chain is Extracellular superoxide dismutase [Cu-Zn] from Drosophila melanogaster (Fruit fly).